Consider the following 442-residue polypeptide: MKEQALITPRTLSGFKDRLPQEAMAKSRLLRTVSEVFEGFGFVPIETPHLEYAEILVKQGSDEIQKELYRFFDHGGRDVALRFDQTVPLARFISQHRNALGLPFKRYAIGNVFRGERAQRGRYREFTQCDFDFIGSESIGSDAEIIQVIYASLKALGIERFTISMNNRKILNGICDYFGVKEQTSDVLRIIDKLDKIGEESVIKELVEELGLSQESARGILGFTSLKQERSSEEFFAKVASYEGLSDSLREGMGEMRALYAILDTLEMDRACYKINFSIARGLGYYTGIVYETTLDALPSIGSVCSGGRYDNLTQSFSKERMSGVGASIGVDRLLAALEELGLLEGRGTSAQVLVACMEESQLAYSYKVAERLRTLGIKSEVYPEAVKPKRSLAYANSKGHPYVAVIGEDELKQGVVTLKDMQWGDQKPCISIEAAAEILLG.

Belongs to the class-II aminoacyl-tRNA synthetase family. In terms of assembly, homodimer.

It is found in the cytoplasm. It catalyses the reaction tRNA(His) + L-histidine + ATP = L-histidyl-tRNA(His) + AMP + diphosphate + H(+). The polypeptide is Histidine--tRNA ligase (Wolinella succinogenes (strain ATCC 29543 / DSM 1740 / CCUG 13145 / JCM 31913 / LMG 7466 / NCTC 11488 / FDC 602W) (Vibrio succinogenes)).